A 102-amino-acid polypeptide reads, in one-letter code: uncharacterized protein (102 aa).

A signal peptide spans 1-19 (MFLFCFVLFCSLVFPLARG).

This is an uncharacterized protein from Saccharomyces cerevisiae (strain ATCC 204508 / S288c) (Baker's yeast).